Reading from the N-terminus, the 395-residue chain is MRDKGEYLFTSESVSEGHPDKVADRISDTVLDAFLKADPYARVACETLVTTNRVVLAGETRGPASVTPELLENLTREAIKDIGYDQEGFSWKNADVAIHLHAQSADIAVGVDSTGNKDEGAGDQGIMFGYACRETPALMPAPIYYSHEILRRLTELRKSGSTEGKLLEPDAKSQVTLRYVDGRPVGATSVVVSTQHGEAASQDELRRIVTGVIGQVLPDGWMPPEQEIYVNPTGKFVIGGPDGDAGLTGRKIIVDTYGGAAPHGGGAFSGKDPTKVDRSAAYVARYLAKNVVAAELADRVTLQISYAIGVSHPLSVYVDLHGTGHDVDEVKLEKTLRELVNLSPRGIREHLRLNRPIYVPTSAYGHFGRTPDMALDNFTWEQTDIAAALRSAFNR.

An ATP-binding site is contributed by His-18. A Mg(2+)-binding site is contributed by Asp-20. A K(+)-binding site is contributed by Glu-46. Residues Glu-59 and Gln-103 each contribute to the L-methionine site. The tract at residues 103–113 (QSADIAVGVDS) is flexible loop. ATP contacts are provided by residues 170–172 (DAK), 235–236 (KF), Asp-244, 250–251 (RK), Ala-267, and Lys-271. Asp-244 serves as a coordination point for L-methionine. Lys-275 provides a ligand contact to L-methionine.

This sequence belongs to the AdoMet synthase family. In terms of assembly, homotetramer; dimer of dimers. Mg(2+) serves as cofactor. K(+) is required as a cofactor.

The protein resides in the cytoplasm. It catalyses the reaction L-methionine + ATP + H2O = S-adenosyl-L-methionine + phosphate + diphosphate. Its pathway is amino-acid biosynthesis; S-adenosyl-L-methionine biosynthesis; S-adenosyl-L-methionine from L-methionine: step 1/1. In terms of biological role, catalyzes the formation of S-adenosylmethionine (AdoMet) from methionine and ATP. The overall synthetic reaction is composed of two sequential steps, AdoMet formation and the subsequent tripolyphosphate hydrolysis which occurs prior to release of AdoMet from the enzyme. This Granulibacter bethesdensis (strain ATCC BAA-1260 / CGDNIH1) protein is S-adenosylmethionine synthase.